The chain runs to 332 residues: Galectin-4 (332 aa).

2 Galectin domains span residues 19-150 and 203-332; these read YHNP…INFI and FNGR…YVQI. 265–271 contributes to the a beta-D-galactoside binding site; sequence WGSEERK. Ser-267 is subject to Phosphoserine.

As to quaternary structure, monomer.

Its function is as follows. Galectin that binds lactose and a related range of sugars. May be involved in the assembly of adherens junctions. This Bos taurus (Bovine) protein is Galectin-4 (LGALS4).